Here is a 447-residue protein sequence, read N- to C-terminus: Sulfoquinovose isomerase (447 aa).

Belongs to the SqvD family.

The enzyme catalyses 6-sulfo-beta-D-quinovose = 6-deoxy-6-sulfo-D-fructose. Part of the sulfo-TK pathway, a D-sulfoquinovose degradation pathway that produces 2-hydroxyethane-1-sulfonate (isethionate). Catalyzes the isomerization of sulfoquinovose (SQ) to 6-deoxy-6-sulfo-D-fructose (SF). This Clostridium sp. (strain MSTE9) protein is Sulfoquinovose isomerase.